A 254-amino-acid chain; its full sequence is UPF0246 protein BDI_1226 (254 aa).

This sequence belongs to the UPF0246 family.

In Parabacteroides distasonis (strain ATCC 8503 / DSM 20701 / CIP 104284 / JCM 5825 / NCTC 11152), this protein is UPF0246 protein BDI_1226.